We begin with the raw amino-acid sequence, 196 residues long: Probable nicotinate-nucleotide adenylyltransferase (196 aa).

This sequence belongs to the NadD family.

The catalysed reaction is nicotinate beta-D-ribonucleotide + ATP + H(+) = deamido-NAD(+) + diphosphate. Its pathway is cofactor biosynthesis; NAD(+) biosynthesis; deamido-NAD(+) from nicotinate D-ribonucleotide: step 1/1. Its function is as follows. Catalyzes the reversible adenylation of nicotinate mononucleotide (NaMN) to nicotinic acid adenine dinucleotide (NaAD). The sequence is that of Probable nicotinate-nucleotide adenylyltransferase from Caldicellulosiruptor bescii (strain ATCC BAA-1888 / DSM 6725 / KCTC 15123 / Z-1320) (Anaerocellum thermophilum).